The primary structure comprises 493 residues: NADH-quinone oxidoreductase subunit N 2 (493 aa).

The next 14 helical transmembrane spans lie at 16–36 (IIPA…DFLI), 45–65 (FLLI…FRQQ), 87–107 (GFAI…AIVS), 119–139 (GEYY…ATGT), 141–161 (LITL…MVGF), 176–196 (LLLG…MYGI), 219–239 (VFLA…AVPF), 258–278 (LSVA…LGPL), 285–305 (WEPL…LAAI), 313–333 (LLAY…VAGN), 340–360 (IAVY…VIIA), 385–405 (AFLM…AGFL), 421–441 (GLAI…FKIV), and 464–484 (CALA…EPFL).

Belongs to the complex I subunit 2 family. In terms of assembly, NDH-1 is composed of 14 different subunits. Subunits NuoA, H, J, K, L, M, N constitute the membrane sector of the complex.

The protein localises to the cell inner membrane. The catalysed reaction is a quinone + NADH + 5 H(+)(in) = a quinol + NAD(+) + 4 H(+)(out). Functionally, NDH-1 shuttles electrons from NADH, via FMN and iron-sulfur (Fe-S) centers, to quinones in the respiratory chain. The immediate electron acceptor for the enzyme in this species is believed to be ubiquinone. Couples the redox reaction to proton translocation (for every two electrons transferred, four hydrogen ions are translocated across the cytoplasmic membrane), and thus conserves the redox energy in a proton gradient. The protein is NADH-quinone oxidoreductase subunit N 2 of Solibacter usitatus (strain Ellin6076).